We begin with the raw amino-acid sequence, 160 residues long: SsrA-binding protein (160 aa).

Residues 133-160 are disordered; it reads KKLHDKRETEKERDWNRQKSRLLKGNSQ. A compositionally biased stretch (basic and acidic residues) spans 137-149; the sequence is DKRETEKERDWNR.

The protein belongs to the SmpB family.

It localises to the cytoplasm. Functionally, required for rescue of stalled ribosomes mediated by trans-translation. Binds to transfer-messenger RNA (tmRNA), required for stable association of tmRNA with ribosomes. tmRNA and SmpB together mimic tRNA shape, replacing the anticodon stem-loop with SmpB. tmRNA is encoded by the ssrA gene; the 2 termini fold to resemble tRNA(Ala) and it encodes a 'tag peptide', a short internal open reading frame. During trans-translation Ala-aminoacylated tmRNA acts like a tRNA, entering the A-site of stalled ribosomes, displacing the stalled mRNA. The ribosome then switches to translate the ORF on the tmRNA; the nascent peptide is terminated with the 'tag peptide' encoded by the tmRNA and targeted for degradation. The ribosome is freed to recommence translation, which seems to be the essential function of trans-translation. This chain is SsrA-binding protein, found in Agrobacterium fabrum (strain C58 / ATCC 33970) (Agrobacterium tumefaciens (strain C58)).